The sequence spans 1883 residues: Endoribonuclease Dicer homolog 1 (1883 aa).

3 disordered regions span residues 71–97 (AESS…PELP), 129–188 (ARKE…DDRR), and 221–262 (RSGT…EKPV). A compositionally biased stretch (pro residues) spans 75–96 (PAPPPPPPPPLPEPVPVAPPEL). 2 stretches are compositionally biased toward basic and acidic residues: residues 129-138 (ARKEPRRESH) and 228-262 (ESDR…EKPV). Residues 274 to 413 (VLEQAKSRNT…QEDCAIKIRN (140 aa)) enclose the Helicase ATP-binding domain. 287–294 (LETGAGKT) is a binding site for ATP. The short motif at 358-361 (DECH) is the DECH box element. A disordered region spans residues 577-604 (KSETSDVEMQNTEKHNTNDLEEGELPDS). The Helicase C-terminal domain occupies 629-789 (LIKILLKYQH…RTDLSHLDGT (161 aa)). A Dicer dsRNA-binding fold domain is found at 817-912 (AVGLIHFYCS…LPDRGSGEGE (96 aa)). A disordered region spans residues 901–928 (TLLPDRGSGEGEKTEQNDEGEPLPGTAR). The segment covering 907-916 (GSGEGEKTEQ) has biased composition (basic and acidic residues). A PAZ domain is found at 1163 to 1296 (HFSDYQNQGK…LPPELCLVHP (134 aa)). 2 RNase III domains span residues 1320-1498 (LAVQ…VAGG) and 1538-1686 (FDTL…LDSG). Mg(2+) is bound by residues Glu1576, Asp1672, and Glu1675. DRBM domains are found at residues 1712 to 1775 (HPVR…VLKE) and 1797 to 1872 (FTRQ…LLNR).

This sequence belongs to the helicase family. Dicer subfamily. In terms of assembly, may interact with ARGONAUTE1 or PINHEAD through their common PAZ domains. Mg(2+) is required as a cofactor. It depends on Mn(2+) as a cofactor.

It localises to the nucleus. In terms of biological role, involved in the RNA silencing pathway. Cleaves double-stranded RNA to produce microRNAs (miRNAs) of 21-24 nucleotides which target the selective destruction of complementary RNAs. Regulates by this way the development of the plant. May not be involved in small interfering RNAs (siRNAs) production. The protein is Endoribonuclease Dicer homolog 1 (DCL1) of Oryza sativa subsp. japonica (Rice).